The chain runs to 220 residues: UPF0319 protein YccT (220 aa).

An N-terminal signal peptide occupies residues 1 to 20; it reads MKTGIVTTLIALCLPVSVFA.

Belongs to the UPF0319 family.

The chain is UPF0319 protein YccT from Escherichia coli O139:H28 (strain E24377A / ETEC).